Here is a 224-residue protein sequence, read N- to C-terminus: MTLVTPLQFSTVQPNLYRGSYPREINLPFLRTLRLKYILSLTPEPLSTDPLMVKFCEENNIKTIHIKCQSERKADKTKPKIKRKKKTVPIEYDVVVRCVKFLIDKGHYPCYMHCTNGELIISLVVACMRKFSYWSTVSILNEFLVYNSSINIHERNFIENFNSEIEVDDLDIKDKVPWITVRYIARTATESKDELRVDDANASEKVARVSSVSNSLPKLKFHSM.

Thr-2 is subject to Phosphothreonine. The Tyrosine-protein phosphatase domain maps to 8-170 (QFSTVQPNLY…FNSEIEVDDL (163 aa)). The active-site Phosphocysteine intermediate is the Cys-114.

The protein belongs to the protein-tyrosine phosphatase family.

The protein localises to the cytoplasm. The enzyme catalyses O-phospho-L-tyrosyl-[protein] + H2O = L-tyrosyl-[protein] + phosphate. Its function is as follows. Required for replication of Brome mosaic virus (BMV). The chain is Putative tyrosine-protein phosphatase OCA6 (OCA6) from Saccharomyces cerevisiae (strain ATCC 204508 / S288c) (Baker's yeast).